The following is a 211-amino-acid chain: Pyridoxine/pyridoxamine 5'-phosphate oxidase (211 aa).

Substrate is bound by residues 7–10 (RREY) and Lys65. FMN contacts are provided by residues 60–65 (RIVLLK), 75–76 (YT), Arg81, Lys82, and Gln104. Residues Tyr122, Arg126, and Ser130 each contribute to the substrate site. FMN-binding positions include 139–140 (QS) and Trp184. Residue 190 to 192 (RLH) participates in substrate binding. Arg194 lines the FMN pocket.

The protein belongs to the pyridoxamine 5'-phosphate oxidase family. As to quaternary structure, homodimer. The cofactor is FMN.

The catalysed reaction is pyridoxamine 5'-phosphate + O2 + H2O = pyridoxal 5'-phosphate + H2O2 + NH4(+). It catalyses the reaction pyridoxine 5'-phosphate + O2 = pyridoxal 5'-phosphate + H2O2. It participates in cofactor metabolism; pyridoxal 5'-phosphate salvage; pyridoxal 5'-phosphate from pyridoxamine 5'-phosphate: step 1/1. The protein operates within cofactor metabolism; pyridoxal 5'-phosphate salvage; pyridoxal 5'-phosphate from pyridoxine 5'-phosphate: step 1/1. In terms of biological role, catalyzes the oxidation of either pyridoxine 5'-phosphate (PNP) or pyridoxamine 5'-phosphate (PMP) into pyridoxal 5'-phosphate (PLP). The polypeptide is Pyridoxine/pyridoxamine 5'-phosphate oxidase (Vibrio vulnificus (strain CMCP6)).